Reading from the N-terminus, the 538-residue chain is Frizzled-4 (538 aa).

A signal peptide spans 1–37 (MAWQGTGPSVRGMPGGVRLRLGLLLLQLLLLQRPALG). Residues 38–213 (FGDEEERRCD…KCGYDAGLYS (176 aa)) lie on the Extracellular side of the membrane. Residues 41 to 162 (EEERRCDPIR…NDHNHMCMEG (122 aa)) enclose the FZ domain. Cystine bridges form between Cys46/Cys107, Cys54/Cys100, Cys91/Cys129, Cys118/Cys159, Cys122/Cys146, Cys182/Cys201, Cys205/Cys283, and Cys303/Cys378. A glycan (N-linked (GlcNAc...) asparagine) is linked at Asn60. A glycan (N-linked (GlcNAc...) asparagine) is linked at Asn145. A helical transmembrane segment spans residues 214–244 (RSAKEFTDIWMAVWASLCFISTTFTVLTFLI). Over 245–250 (DSSRFS) the chain is Cytoplasmic. A helical transmembrane segment spans residues 251-276 (YPERPIIFLSMCYNIYSIAYIVRLTV). Residues 277–300 (GRERISCDFEEAAEPVLIQEGLKN) are Extracellular-facing. Residues 301–334 (TGCAIIFLLMYFFGMASSIWWVILTLTWFLAAGL) form a helical membrane-spanning segment. Over 335-337 (KWG) the chain is Cytoplasmic. The chain crosses the membrane as a helical span at residues 338-366 (HEAIEMHSSYFHIAAWAIPAVKTIVILIM). Topologically, residues 367-384 (RLVDADELTGLCYVGNQS) are extracellular. Asn382 is a glycosylation site (N-linked (GlcNAc...) asparagine). A helical transmembrane segment spans residues 385-419 (LDALTGFVVAPLFTYLVIGTLFIAAGLVALFKIRS). The Cytoplasmic segment spans residues 420–432 (NLQKDGTKTDKLE). Residues 433–461 (RLMVKIGVFSVLYTVPATCVIACYFYEIS) form a helical membrane-spanning segment. Residues 462-474 (NWALFRYSADDSN) lie on the Extracellular side of the membrane. The helical transmembrane segment at 475–496 (MAVEMLKIFMSLLVGITSGMWI) threads the bilayer. Residues 497–538 (WSAKTLHTWQKCSNRLVNSGKVKREKRGNGWVKPGKGNETVV) lie on the Cytoplasmic side of the membrane. The short motif at 500–505 (KTLHTW) is the Lys-Thr-X-X-X-Trp motif, mediates interaction with the PDZ domain of Dvl family members element. The short motif at 536–538 (TVV) is the PDZ-binding element.

The protein belongs to the G-protein coupled receptor Fz/Smo family. As to quaternary structure, interacts with MAGI3 and NDP. Component of a complex, at least composed of TSPAN12, FZD4 and norrin (NDP). Interacts (via FZ domain) with TSKU; TSKU competes with WNT2B for binding to FZD4, inhibiting Wnt signaling and repressing peripheral eye development. Interacts with glypican GPC3. In terms of processing, ubiquitinated by ZNRF3, leading to its degradation by the proteasome.

It is found in the cell membrane. Receptor for Wnt proteins. Most of frizzled receptors are coupled to the beta-catenin (CTNNB1) canonical signaling pathway, which leads to the activation of disheveled proteins, inhibition of GSK-3 kinase, nuclear accumulation of beta-catenin (CTNNB1) and activation of Wnt target genes. Plays a critical role in retinal vascularization by acting as a receptor for Wnt proteins and norrin (NDP). In retina, it can be both activated by Wnt protein-binding, but also by a Wnt-independent signaling via binding of norrin (NDP), promoting in both cases beta-catenin (CTNNB1) accumulation and stimulation of LEF/TCF-mediated transcriptional programs. A second signaling pathway involving PKC and calcium fluxes has been seen for some family members, but it is not yet clear if it represents a distinct pathway or if it can be integrated in the canonical pathway, as PKC seems to be required for Wnt-mediated inactivation of GSK-3 kinase. Both pathways seem to involve interactions with G-proteins. May be involved in transduction and intercellular transmission of polarity information during tissue morphogenesis and/or in differentiated tissues. In Rattus norvegicus (Rat), this protein is Frizzled-4 (Fzd4).